A 1275-amino-acid chain; its full sequence is Serine/threonine-protein kinase ULK4 (1275 aa).

The Protein kinase domain occupies Phe-4–Trp-280. The active-site Proton acceptor is the Asp-121. 2 disordered regions span residues Ser-299–Pro-346 and Phe-359–Thr-393. Positions Phe-336–Pro-346 are enriched in basic and acidic residues. 2 stretches are compositionally biased toward polar residues: residues Ser-363–Val-373 and Cys-384–Thr-393. 6 HEAT repeats span residues Leu-727–Glu-765, Leu-842–His-880, Ser-926–Asn-964, Leu-1025–Ala-1063, Asn-1151–Gly-1189, and Pro-1213–Gly-1253.

This sequence belongs to the protein kinase superfamily. Ser/Thr protein kinase family. APG1/unc-51/ULK1 subfamily.

It catalyses the reaction L-seryl-[protein] + ATP = O-phospho-L-seryl-[protein] + ADP + H(+). The enzyme catalyses L-threonyl-[protein] + ATP = O-phospho-L-threonyl-[protein] + ADP + H(+). In terms of biological role, may be involved in the remodeling of cytoskeletal components, such as alpha-tubulin, and in this way regulates neurite branching and elongation, as well as cell motility. The sequence is that of Serine/threonine-protein kinase ULK4 (ULK4) from Pongo abelii (Sumatran orangutan).